Here is a 409-residue protein sequence, read N- to C-terminus: Outer membrane protein assembly factor BamB (409 aa).

Residues 1–34 (MAGNILLLILDYVFHAGSRTLRVCILSLLILLSG) form the signal peptide. Residue Cys-35 is the site of N-palmitoyl cysteine attachment. Cys-35 carries the S-diacylglycerol cysteine lipid modification.

Belongs to the BamB family. In terms of assembly, part of the Bam complex.

It is found in the cell outer membrane. Its function is as follows. Part of the outer membrane protein assembly complex, which is involved in assembly and insertion of beta-barrel proteins into the outer membrane. This chain is Outer membrane protein assembly factor BamB, found in Nitrosomonas eutropha (strain DSM 101675 / C91 / Nm57).